Consider the following 349-residue polypeptide: 1-acylglycerol-3-phosphate O-acyltransferase ABHD5 (349 aa).

Alanine 2 carries the N-acetylalanine modification. The AB hydrolase-1 domain occupies 77–184; the sequence is PLVLLHGFGG…LVEPWGFPER (108 aa). Phosphoserine is present on serine 122. The short motif at 327 to 332 is the HXXXXD motif element; it reads HYVYAD.

It belongs to the peptidase S33 family. ABHD4/ABHD5 subfamily. In terms of assembly, interacts with ADRP, PLIN and PNPLA2. Interacts with PLIN5; promotes interaction with PNPLA2.

The protein localises to the cytoplasm. It is found in the lipid droplet. It carries out the reaction a 1-acyl-sn-glycero-3-phosphate + an acyl-CoA = a 1,2-diacyl-sn-glycero-3-phosphate + CoA. It catalyses the reaction 1-(9Z-octadecenoyl)-sn-glycero-3-phosphate + (9Z)-octadecenoyl-CoA = 1,2-di-(9Z-octadecenoyl)-sn-glycero-3-phosphate + CoA. The catalysed reaction is 1-(9Z-octadecenoyl)-sn-glycero-3-phosphate + hexadecanoyl-CoA = 1-(9Z)-octadecenoyl-2-hexadecanoyl-sn-glycero-3-phosphate + CoA. The enzyme catalyses 1-(9Z-octadecenoyl)-sn-glycero-3-phosphate + octadecanoyl-CoA = 1-(9Z-octadecenoyl)-2-octadecanoyl-sn-glycero-3-phosphate + CoA. It carries out the reaction 1-(9Z-octadecenoyl)-sn-glycero-3-phosphate + (5Z,8Z,11Z,14Z)-eicosatetraenoyl-CoA = 1-(9Z)-octadecenoyl-2-(5Z,8Z,11Z,14Z)-eicosatetraenoyl-sn-glycero-3-phosphate + CoA. It catalyses the reaction eicosanoyl-CoA + 1-(9Z-octadecenoyl)-sn-glycero-3-phosphate = 1-(9Z)-octadecenoyl-2-eicosanoyl-sn-glycero-3-phosphate + CoA. The catalysed reaction is 1-hexadecanoyl-sn-glycero-3-phosphate + (9Z)-octadecenoyl-CoA = 1-hexadecanoyl-2-(9Z-octadecenoyl)-sn-glycero-3-phosphate + CoA. The enzyme catalyses 1-octadecanoyl-sn-glycero-3-phosphate + (9Z)-octadecenoyl-CoA = 1-octadecanoyl-2-(9Z-octadecenoyl)-sn-glycero-3-phosphate + CoA. It carries out the reaction 1-(5Z,8Z,11Z,14Z-eicosatetraenoyl)-sn-glycero-3-phosphate + (9Z)-octadecenoyl-CoA = 1-(5Z,8Z,11Z,14Z)-eicosatetraenoyl-2-(9Z)-octadecenoyl-sn-glycero-3-phosphate + CoA. With respect to regulation, acyltransferase activity is inhibited by detergents such as Triton X-100 and 3-[(3-cholamidopropyl)dimethylammonio]-1-propanesulfonate (CHAPS). Acyltransferase activity is inhibited by the presence of magnesium and calcium. Its function is as follows. Coenzyme A-dependent lysophosphatidic acid acyltransferase that catalyzes the transfer of an acyl group on a lysophosphatidic acid. Functions preferentially with 1-oleoyl-lysophosphatidic acid followed by 1-palmitoyl-lysophosphatidic acid, 1-stearoyl-lysophosphatidic acid and 1-arachidonoyl-lysophosphatidic acid as lipid acceptor. Functions preferentially with arachidonoyl-CoA followed by oleoyl-CoA as acyl group donors. Functions in phosphatidic acid biosynthesis. May regulate the cellular storage of triacylglycerol through activation of the phospholipase PNPLA2. Involved in keratinocyte differentiation. Regulates lipid droplet fusion. The chain is 1-acylglycerol-3-phosphate O-acyltransferase ABHD5 from Pongo abelii (Sumatran orangutan).